A 242-amino-acid polypeptide reads, in one-letter code: Outer membrane protein class 4 (242 aa).

Residues 1–22 form the signal peptide; it reads MTKQLKLSALFVALLASGTAVA. 7 consecutive repeat copies span residues 69-70, 71-72, 73-74, 75-76, 77-78, 79-80, and 81-82. The segment at 69–82 is 7 X 2 AA tandem repeats of X-P; it reads APEPEPEPEPAPAP. An OmpA-like domain is found at 92–229; sequence YVDETISLSA…RVDVKIRSIV (138 aa). An intrachain disulfide couples cysteine 191 to cysteine 214.

It belongs to the outer membrane OOP (TC 1.B.6) superfamily.

The protein localises to the cell outer membrane. This Neisseria meningitidis serogroup A / serotype 4A (strain DSM 15465 / Z2491) protein is Outer membrane protein class 4 (rmpM).